The primary structure comprises 504 residues: Probable phenylalanine--tRNA ligase beta subunit (504 aa).

Residues 270-346 (IKDKSYLLSI…ICYGFNNINM (77 aa)) form the B5 domain. The Mg(2+) site is built by D324, D330, E333, and D334.

It belongs to the phenylalanyl-tRNA synthetase beta subunit family. Type 2 subfamily. Tetramer of two alpha and two beta subunits. Mg(2+) is required as a cofactor.

Its subcellular location is the cytoplasm. The catalysed reaction is tRNA(Phe) + L-phenylalanine + ATP = L-phenylalanyl-tRNA(Phe) + AMP + diphosphate + H(+). The sequence is that of Probable phenylalanine--tRNA ligase beta subunit from Vairimorpha ceranae (strain BRL01) (Microsporidian parasite).